Reading from the N-terminus, the 214-residue chain is GTP-binding protein ypt3 (214 aa).

17 to 24 is a binding site for GTP; sequence GDSGVGKS. The short motif at 39–47 is the Effector region element; that stretch reads SKSTIGVEF. A Phosphothreonine modification is found at T42. Residues 65-69 and 123-126 each bind GTP; these read DTAGQ and NKTD. Residues C213 and C214 are each lipidated (S-geranylgeranyl cysteine).

The protein belongs to the small GTPase superfamily. Rab family.

The protein localises to the cell membrane. Its subcellular location is the endosome membrane. The protein resides in the golgi apparatus membrane. It localises to the cytoplasm. It is found in the nucleus. Its function is as follows. Has a role in retrograde traffricking of proteins from the endosome to the Golgi. Involved in the secretory pathway where it has a role in acid phosphatase secretion. The sequence is that of GTP-binding protein ypt3 (ypt3) from Schizosaccharomyces pombe (strain 972 / ATCC 24843) (Fission yeast).